The sequence spans 766 residues: Protein transport protein Sec23B (766 aa).

The residue at position 2 (A2) is an N-acetylalanine. Zn(2+) is bound by residues C61, C66, C85, and C88. K564 bears the N6-acetyllysine mark. The Gelsolin-like repeat unit spans residues 633–719 (PEPVLLDSSS…EHGGSQARFL (87 aa)).

The protein belongs to the SEC23/SEC24 family. SEC23 subfamily. As to quaternary structure, COPII is composed of at least five proteins: the Sec23/24 complex, the Sec13/31 complex and Sar1. Interacts with SAR1A.

It is found in the cytoplasmic vesicle. It localises to the COPII-coated vesicle membrane. The protein localises to the endoplasmic reticulum membrane. The protein resides in the cytoplasm. Its subcellular location is the cytosol. In terms of biological role, component of the coat protein complex II (COPII) which promotes the formation of transport vesicles from the endoplasmic reticulum (ER). The coat has two main functions, the physical deformation of the endoplasmic reticulum membrane into vesicles and the selection of cargo molecules for their transport to the Golgi complex. The sequence is that of Protein transport protein Sec23B from Pongo abelii (Sumatran orangutan).